The chain runs to 445 residues: Phosphoglucosamine mutase (445 aa).

Ser101 serves as the catalytic Phosphoserine intermediate. 4 residues coordinate Mg(2+): Ser101, Asp240, Asp242, and Asp244. Position 101 is a phosphoserine (Ser101).

This sequence belongs to the phosphohexose mutase family. It depends on Mg(2+) as a cofactor. Post-translationally, activated by phosphorylation.

The enzyme catalyses alpha-D-glucosamine 1-phosphate = D-glucosamine 6-phosphate. Functionally, catalyzes the conversion of glucosamine-6-phosphate to glucosamine-1-phosphate. The chain is Phosphoglucosamine mutase from Pseudomonas fluorescens (strain Pf0-1).